We begin with the raw amino-acid sequence, 76 residues long: Large ribosomal subunit protein eL20 (76 aa).

The protein belongs to the eukaryotic ribosomal protein eL20 family. As to quaternary structure, part of the 50S ribosomal subunit. Binds 23S rRNA.

The sequence is that of Large ribosomal subunit protein eL20 from Methanococcus maripaludis (strain DSM 14266 / JCM 13030 / NBRC 101832 / S2 / LL).